A 120-amino-acid chain; its full sequence is Acylphosphatase-1 (120 aa).

A2 bears the N-acetylalanine mark. One can recognise an Acylphosphatase-like domain in the interval 8-98; sequence SCEFEVFGRV…YGYANFHIKP (91 aa). Catalysis depends on residues R23 and N41. The tract at residues 91–120 is disordered; sequence YANFHIKPDPHENRPVHEGLGSSSSHHDSN. Residues 96 to 107 show a composition bias toward basic and acidic residues; it reads IKPDPHENRPVH.

This sequence belongs to the acylphosphatase family.

It localises to the cytoplasm. The enzyme catalyses an acyl phosphate + H2O = a carboxylate + phosphate + H(+). This Drosophila melanogaster (Fruit fly) protein is Acylphosphatase-1 (Acyp).